The primary structure comprises 74 residues: Lambda-hexatoxin-Hv1d (74 aa).

Residues 1–22 (MNTATCFIVLLVVATVIGGIEA) form the signal peptide. The propeptide occupies 23–35 (GESDMRKDVMGLF). Cystine bridges form between cysteine 40–cysteine 54, cysteine 47–cysteine 59, cysteine 50–cysteine 51, and cysteine 53–cysteine 69.

Belongs to the neurotoxin 11 (kappa toxin) family. Expressed by the venom gland.

It localises to the secreted. Functionally, this excitatory toxin inhibits insect calcium-activated potassium (KCa) channels (Slo-type). This Hadronyche versuta (Blue mountains funnel-web spider) protein is Lambda-hexatoxin-Hv1d.